Here is a 173-residue protein sequence, read N- to C-terminus: Alpha-crystallin A chain (173 aa).

Met-1 is subject to N-acetylmethionine. Residues 52–162 enclose the sHSP domain; sequence LFRGFMDSGI…SHSERPIPVS (111 aa). Residues His-100, Glu-102, His-107, and His-154 each contribute to the Zn(2+) site. Residues 146 to 173 form a disordered region; sequence MMSGLDSSHSERPIPVSREEKPTSAPSS. Residues 153 to 167 show a composition bias toward basic and acidic residues; it reads SHSERPIPVSREEKP.

This sequence belongs to the small heat shock protein (HSP20) family. Heteropolymer composed of three CRYAA and one CRYAB subunits. Inter-subunit bridging via zinc ions enhances stability, which is crucial as there is no protein turn over in the lens. Can also form homodimers and homotetramers (dimers of dimers) which serve as the building blocks of homooligomers. Within homooligomers, the zinc-binding motif is created from residues of 3 different molecules. His-100 and Glu-102 from one molecule are ligands of the zinc ion, and His-107 and His-154 residues from additional molecules complete the site with tetrahedral coordination geometry.

It is found in the cytoplasm. The protein localises to the nucleus. Contributes to the transparency and refractive index of the lens. May act as a chaperone, preventing aggregation of various proteins under a wide range of stress conditions. This chain is Alpha-crystallin A chain (CRYAA), found in Aquarana catesbeiana (American bullfrog).